Reading from the N-terminus, the 350-residue chain is MITVNFLILLLGLVFLVKGSDYFVKSASTIAKKLGVSEFVIGLTLVAIGTSIPELASSIAASIQQASGIVIGNVVGSNIANVGLIVGVAALLSPMKTEIDMLKRDGYIMLFSAVLFFVFAFNRELSMLEAGLFVLLYIAYVFFLFEEAEKYEGKLHFKEFITYFFKFKYINSAMQKLNGNRNRNSDSDRNSDSGNGNERLEGGFAKDIFTLVLSCAAIVIGAKYFVEESIFFAELLGIPDTVIGTTLVAVGTSLPELVVTVSAARQGYGSIALGNVIGSNITNIFLILGLSGLFYPLSVAEMSLFFTTPVMIAISLILLIFISTGWEIKRWEGVVLMMFYVAFLVVLFYI.

The next 10 membrane-spanning stretches (helical) occupy residues 4-24 (VNFLILLLGLVFLVKGSDYFV), 39-59 (FVIGLTLVAIGTSIPELASSI), 69-89 (IVIGNVVGSNIANVGLIVGVA), 101-121 (MLKRDGYIMLFSAVLFFVFAF), 125-145 (LSMLEAGLFVLLYIAYVFFLF), 202-222 (GGFAKDIFTLVLSCAAIVIGA), 242-264 (VIGTTLVAVGTSLPELVVTVSAA), 276-296 (VIGSNITNIFLILGLSGLFYP), 302-322 (MSLFFTTPVMIAISLILLIFI), and 330-350 (RWEGVVLMMFYVAFLVVLFYI).

Belongs to the Ca(2+):cation antiporter (CaCA) (TC 2.A.19) family.

It is found in the cell membrane. Its activity is regulated as follows. Calcium transport is inhibited by Na(+), K(+), Li(+), Mg(2+) or Mn(2+). Functionally, catalyzes Na(+)/Ca(2+) exchange. The transport is electrogenic with a likely stoichiometry of 3 or more Na(+) for each Ca(2+). Is K(+)-independent. The sequence is that of Sodium/calcium exchanger MaX1 (maX1) from Methanosarcina acetivorans (strain ATCC 35395 / DSM 2834 / JCM 12185 / C2A).